Consider the following 157-residue polypeptide: Protein Smg homolog (157 aa).

This sequence belongs to the Smg family.

The sequence is that of Protein Smg homolog from Idiomarina loihiensis (strain ATCC BAA-735 / DSM 15497 / L2-TR).